We begin with the raw amino-acid sequence, 746 residues long: 4-hydroxy-3-methylbut-2-en-1-yl diphosphate synthase (flavodoxin) (746 aa).

Residues Cys653, Cys656, Cys687, and Glu694 each contribute to the [4Fe-4S] cluster site.

This sequence belongs to the IspG family. [4Fe-4S] cluster serves as cofactor.

The enzyme catalyses (2E)-4-hydroxy-3-methylbut-2-enyl diphosphate + oxidized [flavodoxin] + H2O + 2 H(+) = 2-C-methyl-D-erythritol 2,4-cyclic diphosphate + reduced [flavodoxin]. The protein operates within isoprenoid biosynthesis; isopentenyl diphosphate biosynthesis via DXP pathway; isopentenyl diphosphate from 1-deoxy-D-xylulose 5-phosphate: step 5/6. Converts 2C-methyl-D-erythritol 2,4-cyclodiphosphate (ME-2,4cPP) into 1-hydroxy-2-methyl-2-(E)-butenyl 4-diphosphate. This is 4-hydroxy-3-methylbut-2-en-1-yl diphosphate synthase (flavodoxin) from Chlorobaculum tepidum (strain ATCC 49652 / DSM 12025 / NBRC 103806 / TLS) (Chlorobium tepidum).